The chain runs to 750 residues: Neprilysin (750 aa).

A lipid anchor (N-myristoyl glycine) is attached at glycine 2. The Cytoplasmic portion of the chain corresponds to glycine 2–glutamate 28. A phosphoserine mark is found at serine 4 and serine 6. The Stop-transfer sequence signature appears at proline 16–arginine 23. A helical; Signal-anchor for type II membrane protein transmembrane segment spans residues isoleucine 29–threonine 51. The Extracellular portion of the chain corresponds to tyrosine 52–tryptophan 750. The Peptidase M13 domain maps to isoleucine 56–tryptophan 750. Intrachain disulfides connect cysteine 57-cysteine 62, cysteine 80-cysteine 735, cysteine 88-cysteine 695, cysteine 143-cysteine 411, cysteine 234-cysteine 242, and cysteine 621-cysteine 747. Arginine 103 is a binding site for a peptide. 2 N-linked (GlcNAc...) asparagine glycosylation sites follow: asparagine 145 and asparagine 211. 3 N-linked (GlcNAc...) asparagine glycosylation sites follow: asparagine 285, asparagine 311, and asparagine 325. Zn(2+) is bound at residue histidine 584. Glutamate 585 is an active-site residue. Histidine 588 lines the Zn(2+) pocket. Residue asparagine 628 is glycosylated (N-linked (GlcNAc...) asparagine). Glutamate 647 lines the Zn(2+) pocket. The active-site Proton donor is the aspartate 651.

The protein belongs to the peptidase M13 family. Zn(2+) is required as a cofactor. Myristoylation is a determinant of membrane targeting. In terms of processing, glycosylation at Asn-628 is necessary both for surface expression and neutral endopeptidase activity.

The protein resides in the cell membrane. The catalysed reaction is Preferential cleavage of polypeptides between hydrophobic residues, particularly with Phe or Tyr at P1'.. It carries out the reaction substance P + H2O = substance P(1-9) + L-Leu-L-Met-NH2. It catalyses the reaction substance P + H2O = substance P(1-7) + L-Phe-Gly-L-Leu-L-Met-NH2. The enzyme catalyses neurotensin + H2O = neurotensin(1-11) + L-isoleucyl-L-leucine. The catalysed reaction is neurotensin + H2O = neurotensin(1-10) + L-tyrosyl-L-isoleucyl-L-leucine. Thermolysin-like specificity, but is almost confined on acting on polypeptides of up to 30 amino acids. Biologically important in the destruction of opioid peptides such as Met- and Leu-enkephalins by cleavage of a Gly-Phe bond. Catalyzes cleavage of bradykinin, substance P and neurotensin peptides. Able to cleave angiotensin-1, angiotensin-2 and angiotensin 1-9. Involved in the degradation of the atrial natriuretic factor (ANF). Displays UV-inducible elastase activity toward skin preelastic and elastic fibers. This is Neprilysin from Mus musculus (Mouse).